Consider the following 136-residue polypeptide: Large ribosomal subunit protein uL16 (136 aa).

This sequence belongs to the universal ribosomal protein uL16 family. In terms of assembly, part of the 50S ribosomal subunit.

Its function is as follows. Binds 23S rRNA and is also seen to make contacts with the A and possibly P site tRNAs. The chain is Large ribosomal subunit protein uL16 from Shewanella sediminis (strain HAW-EB3).